The primary structure comprises 149 residues: Arginine repressor (149 aa).

It belongs to the ArgR family.

It localises to the cytoplasm. It participates in amino-acid biosynthesis; L-arginine biosynthesis [regulation]. Functionally, regulates arginine biosynthesis genes. This is Arginine repressor from Bacillus velezensis (strain DSM 23117 / BGSC 10A6 / LMG 26770 / FZB42) (Bacillus amyloliquefaciens subsp. plantarum).